We begin with the raw amino-acid sequence, 359 residues long: MSLLFLVLLSPFPCVLGLPFYNGFYYSNDLSGRTLGNGYGEGLFNGVKLVVETTEESLFSHQGASVTLPCHYHYEPALASPRHVRVKWWKLSENGAPEQDVLVVIGQRHRSFGDYQGRVQLRQDKQQEVSLELRDLRLEDSGRYRCEVIDGLEDESGLVELELRGVVFPYQSREGRYQLNFHEAQQACQEQGAMVATFEQLFRAWEEGLDWCNAGWLQDASVQYPIVLPRQPCGGLGLAPGVRSYGQRHHRLHRYDVFCFAAALKGRVYYLENPKKLTLLEAREACQEDGAQISTVGQLFAAWKFRGLDRCDAGWLADGSARYPIVHPRLNCGPPEPGVRTFGFPDPHTRYGVYCYVQH.

The signal sequence occupies residues 1–17 (MSLLFLVLLSPFPCVLG). The 117-residue stretch at 48-164 (KLVVETTEES…ESGLVELELR (117 aa)) folds into the Ig-like V-type domain. Disulfide bonds link cysteine 70–cysteine 146, cysteine 188–cysteine 259, cysteine 212–cysteine 233, cysteine 286–cysteine 355, and cysteine 311–cysteine 332. Link domains lie at 166–261 (VVFP…FCFA) and 266–357 (GRVY…YCYV).

This sequence belongs to the HAPLN family.

Its subcellular location is the secreted. It is found in the extracellular space. The protein resides in the extracellular matrix. In terms of biological role, may function in hyaluronic acid binding. The protein is Hyaluronan and proteoglycan link protein 3 (Hapln3) of Mus musculus (Mouse).